The chain runs to 462 residues: Elongation factor 1-alpha 1 (462 aa).

Gly-2 carries the n,N,N-trimethylglycine modification. Positions 5 to 242 (KTHINIVVIG…DCILPPTRPT (238 aa)) constitute a tr-type G domain. Positions 14–21 (GHVDSGKS) are G1. Position 14-21 (14-21 (GHVDSGKS)) interacts with GTP. The segment at 70-74 (GITID) is G2. The segment at 91-94 (DAPG) is G3. Residues 153–156 (NKMD) and 194–196 (SGW) contribute to the GTP site. Positions 153–156 (NKMD) are G4. The segment at 194 to 196 (SGW) is G5. A 5-glutamyl glycerylphosphorylethanolamine mark is found at Glu-301 and Glu-374.

This sequence belongs to the TRAFAC class translation factor GTPase superfamily. Classic translation factor GTPase family. EF-Tu/EF-1A subfamily.

Its subcellular location is the cytoplasm. The enzyme catalyses GTP + H2O = GDP + phosphate + H(+). In terms of biological role, translation elongation factor that catalyzes the GTP-dependent binding of aminoacyl-tRNA (aa-tRNA) to the A-site of ribosomes during the elongation phase of protein synthesis. Base pairing between the mRNA codon and the aa-tRNA anticodon promotes GTP hydrolysis, releasing the aa-tRNA from EEF1A1 and allowing its accommodation into the ribosome. The growing protein chain is subsequently transferred from the P-site peptidyl tRNA to the A-site aa-tRNA, extending it by one amino acid through ribosome-catalyzed peptide bond formation. The protein is Elongation factor 1-alpha 1 (EEF1A) of Gallus gallus (Chicken).